The following is a 426-amino-acid chain: MAAIEAVNAREILDSRGNPTVEVEVLLEDGTFTRAAVPSGASTGAFEAYELRDGDAGRYLGKGVQKAVAAVVDEIGPAIQDLDAADQRIIDATMIELDGTENKSRLGANALLGVSLAVAKAAADSAELPLYRYLGGPNAHTLPVPMLNVINGGSHADTNVDIQEFMLLPVGASTFSEGLRWGVETYHALKSLLKKKGLSTGLGDEGGFAPNLDSNRAALDLLMEAIDAAGFTAGKQIALGLDVASSEFYSDGAYTFEGQKVDAAHLTAYFADLVASYPLITIEDPLDEDDWAGYDHFTAELGSKVQIVGDDLFVTNPKRLADGITRGVANSILVKVNQIGTLTETLDAVSLAQRSGYTTVLSHRSGETEDTTIADLAVAVEAGQIKTGAPARSERVAKYNQLLRIEQDLGAAAVYAGRSAFPRFQA.

Gln-163 is a binding site for (2R)-2-phosphoglycerate. The Proton donor role is filled by Glu-205. Residues Asp-242, Glu-283, and Asp-310 each coordinate Mg(2+). The (2R)-2-phosphoglycerate site is built by Lys-335, Arg-364, Ser-365, and Lys-386. Lys-335 acts as the Proton acceptor in catalysis.

It belongs to the enolase family. Requires Mg(2+) as cofactor.

Its subcellular location is the cytoplasm. The protein resides in the secreted. It is found in the cell surface. The enzyme catalyses (2R)-2-phosphoglycerate = phosphoenolpyruvate + H2O. Its pathway is carbohydrate degradation; glycolysis; pyruvate from D-glyceraldehyde 3-phosphate: step 4/5. Functionally, catalyzes the reversible conversion of 2-phosphoglycerate (2-PG) into phosphoenolpyruvate (PEP). It is essential for the degradation of carbohydrates via glycolysis. The protein is Enolase of Clavibacter sepedonicus (Clavibacter michiganensis subsp. sepedonicus).